The chain runs to 146 residues: Angiogenin (146 aa).

The signal sequence occupies residues 1–24 (MVMGLGLFLLVFMLGLGLTLPTLA). At Q25 the chain carries Pyrrolidone carboxylic acid. Catalysis depends on H37, which acts as the Proton acceptor. TRNA is bound at residue R45. 3 disulfides stabilise this stretch: C50–C105, C63–C116, and C81–C131. The short motif at 55–59 (RRRHL) is the Nucleolar localization signal element. TRNA contacts are provided by C105 and I127. H138 functions as the Proton donor in the catalytic mechanism.

This sequence belongs to the pancreatic ribonuclease family. As to quaternary structure, homodimer. Interacts with RNH1; inhibiting ANG ribonuclease activity. Interacts with PCNA.

It localises to the secreted. It is found in the nucleus. The protein localises to the nucleolus. Its subcellular location is the cytoplasm. The protein resides in the stress granule. Its activity is regulated as follows. Has weak tRNA ribonuclease activity by itself due to partial autoinhibition by its C-terminus, which folds into a short alpha-helix that partially occludes the substrate-binding site. In absence of stress, the ribonuclease activity is inhibited by RNH1 in the cytoplasm. In response to stress, dissociates from RNH1 in the cytoplasm and associates with cytoplasmic ribosomes with vacant A-sites: ribosomes directly activate the tRNA ribonuclease activity of ANG by refolding the C-terminal alpha-helix. In response to stress, the angiogenic activity of ANG is inhibited by RNH1 in the nucleus. Functionally, secreted ribonuclease that can either promote or restrict cell proliferation of target cells, depending on the context. Endocytosed in target cells via its receptor PLXNB2 and translocates to the cytoplasm or nucleus. Under stress conditions, localizes to the cytoplasm and promotes the assembly of stress granules (SGs): specifically cleaves a subset of tRNAs within anticodon loops to produce tRNA-derived stress-induced fragments (tiRNAs), resulting in translation repression and inhibition of cell proliferation. tiRNas also prevent formation of apoptosome, thereby promoting cell survival. Preferentially cleaves RNAs between a pyrimidine and an adenosine residue, suggesting that it cleaves the anticodon loop of tRNA(Ala) (32-UUAGCAU-38) after positions 33 and 36. Cleaves a subset of tRNAs, including tRNA(Ala), tRNA(Glu), tRNA(Gly), tRNA(Lys), tRNA(Val), tRNA(His), tRNA(Asp) and tRNA(Sec). Under growth conditions and in differentiated cells, translocates to the nucleus and stimulates ribosomal RNA (rRNA) transcription, including that containing the initiation site sequences of 45S rRNA, thereby promoting cell growth and proliferation. Angiogenin induces vascularization of normal and malignant tissues via its ability to promote rRNA transcription. Involved in hematopoietic stem and progenitor cell (HSPC) growth and survival by promoting rRNA transcription in growth conditions and inhibiting translation in response to stress, respectively. Mediates the crosstalk between myeloid and intestinal epithelial cells to protect the intestinal epithelial barrier integrity: secreted by myeloid cells and promotes intestinal epithelial cells proliferation and survival. Also mediates osteoclast-endothelial cell crosstalk in growing bone: produced by osteoclasts and protects the neighboring vascular cells against senescence by promoting rRNA transcription. The polypeptide is Angiogenin (ANG) (Papio hamadryas (Hamadryas baboon)).